Reading from the N-terminus, the 459-residue chain is Sorting nexin-8 (459 aa).

The interval 1–53 (MTGGAMDPLPTAPGAAAAEAEVDEEADPPAADSPVPPVSEPRAPDAGQMQVPP) is disordered. The PX domain maps to 68–176 (ARDAVQVELV…KLFLSFSGPD (109 aa)). A 1,2-diacyl-sn-glycero-3-phospho-(1D-myo-inositol-3-phosphate) is bound by residues Arg104, Lys130, and Arg143.

It belongs to the sorting nexin family.

Its subcellular location is the early endosome membrane. Its function is as follows. May be involved in several stages of intracellular trafficking. May play a role in intracellular protein transport from early endosomes to the trans-Golgi network. The protein is Sorting nexin-8 (SNX8) of Bos taurus (Bovine).